The chain runs to 519 residues: Dideacetyl fusicoccin A C-19 hydroxylase (519 aa).

Residues 16-36 traverse the membrane as a helical segment; it reads LPVAPILFTALAATIGAFLLS. Asn177, Asn327, Asn414, and Asn432 each carry an N-linked (GlcNAc...) asparagine glycan. Cys454 lines the heme pocket.

This sequence belongs to the cytochrome P450 family. Heme serves as cofactor.

The protein resides in the membrane. It functions in the pathway mycotoxin biosynthesis. Its function is as follows. Cytochrome P450 monooxygenase; part of the 2 gene clusters that mediate the biosynthesis of fusicoccins, diterpene glucosides that display phytohormone-like activity and function as potent activators of plasma membrane H(+)-ATPases in plants by modifying 14-3-3 proteins and cause the plant disease constriction canker. The first step in the pathway is performed by the fusicoccadiene synthase PaFS that possesses both prenyl transferase and terpene cyclase activity, converting isopentenyl diphosphate and dimethylallyl diphosphate into geranylgeranyl diphosphate (GGDP) and successively converting GGDP into fusicocca-2,10(14)-diene, a precursor for fusicoccin H. The second step is the oxidation at the C-8 position by the cytochrome P450 monooxygenase PaP450-2 to yield fusicocca-2,10(14)-diene-8-beta-ol. The cytochrome P450 monooxygenase PaP450-1 then catalyzes the hydroxylation at the C-16 position to produce fusicocca-2,10(14)-diene-8-beta,16-diol. The dioxygenase fc-dox then catalyzes the 16-oxydation of fusicocca-2,10(14)-diene-8-beta,16-diol to yield an aldehyde (8-beta-hydroxyfusicocca-1,10(14)-dien-16-al). The short-chain dehydrogenase/reductase fc-sdr catalyzes the reduction of the aldehyde to yield fusicocca-1,10(14)-diene-8-beta,16-diol. The next step is the hydroxylation at C-9 performed by the cytochrome P450 monooxygenase PaP450-3 that leads to fusicoccin H aglycon which is glycosylated to fusicoccin H by the O-glycosyltransferase PaGT. Hydroxylation at C-12 by the cytochrome P450 monooxygenase PaP450-4 leads then to the production of fusicoccin Q and is followed by methylation by the O-methyltransferase PaMT to yield fusicoccin P. Fusicoccin P is further converted to fusicoccin J via prenylation by the O-glucose prenyltransferase PaPT. Cytochrome P450 monooxygenase PaP450-5 then performs hydroxylation at C-19 to yield dideacetyl-fusicoccin A which is acetylated to 3'-O-deacetyl-fusicoccin A by the O-acetyltransferase PaAT-2. Finally, a another acetylation by the O-acetyltransferase PaAT-1 yields fusicoccin A. This Phomopsis amygdali (Fusicoccum amygdali) protein is Dideacetyl fusicoccin A C-19 hydroxylase.